Here is a 61-residue protein sequence, read N- to C-terminus: Large ribosomal subunit protein bL32 (61 aa).

The segment covering 1–16 has biased composition (basic residues); the sequence is MAVPKRKTSPSRRGMR. The disordered stretch occupies residues 1-44; that stretch reads MAVPKRKTSPSRRGMRRSADALKAPTYVEDKDSGELRRPHHIDL. The segment covering 28-44 has biased composition (basic and acidic residues); that stretch reads VEDKDSGELRRPHHIDL.

Belongs to the bacterial ribosomal protein bL32 family.

In Methylobacterium nodulans (strain LMG 21967 / CNCM I-2342 / ORS 2060), this protein is Large ribosomal subunit protein bL32.